Reading from the N-terminus, the 70-residue chain is DNA gyrase inhibitor YacG (70 aa).

Zn(2+)-binding residues include Cys-7, Cys-10, Cys-26, and Cys-30.

The protein belongs to the DNA gyrase inhibitor YacG family. As to quaternary structure, interacts with GyrB. The cofactor is Zn(2+).

Functionally, inhibits all the catalytic activities of DNA gyrase by preventing its interaction with DNA. Acts by binding directly to the C-terminal domain of GyrB, which probably disrupts DNA binding by the gyrase. The polypeptide is DNA gyrase inhibitor YacG (Shewanella sediminis (strain HAW-EB3)).